Here is a 171-residue protein sequence, read N- to C-terminus: Co-chaperone protein HscB homolog (171 aa).

The region spanning 2-74 (NHFELFGLPS…ISRAEYILAE (73 aa)) is the J domain.

It belongs to the HscB family. As to quaternary structure, interacts with HscA and stimulates its ATPase activity.

Co-chaperone involved in the maturation of iron-sulfur cluster-containing proteins. Seems to help targeting proteins to be folded toward HscA. This Vibrio parahaemolyticus serotype O3:K6 (strain RIMD 2210633) protein is Co-chaperone protein HscB homolog.